Reading from the N-terminus, the 1620-residue chain is ABC-type organic anion transporter ABCA8B (1620 aa).

7 helical membrane passes run 30 to 50 (SLME…YPHG), 223 to 243 (FFIF…SINV), 267 to 287 (SWGL…ALVI), 298 to 318 (FMVV…LAFL), 326 to 346 (SVLT…LGFT), 352 to 372 (LPAP…TLGM), and 396 to 416 (LIIA…ALMM). Residues 479–714 (IRIRNISKEY…WGVGYHLSLQ (236 aa)) form the ABC transporter 1 domain. 515–522 (GHSGAGKS) is an ATP binding site. The N-linked (GlcNAc...) asparagine glycan is linked to Asn723. The next 8 membrane-spanning stretches (helical) occupy residues 860–880 (TLLS…FENI), 979–999 (CFPV…KPSA), 1023–1043 (TAFW…SSVT), 1069–1089 (MVDI…DYLF), 1105–1125 (IPCS…ISFI), 1135–1155 (IWSL…LLAF), 1164–1184 (IIFL…LHLF), and 1194–1214 (VIEP…FIFT). Residues 1283 to 1516 (LRKEYAGKQK…FGKDYLLEMK (234 aa)) enclose the ABC transporter 2 domain. 1321–1328 (GHNGAGKS) lines the ATP pocket.

The protein belongs to the ABC transporter superfamily. ABCA family. In terms of tissue distribution, expressed in heart, brain, lung, liver and skeletal muscle. Highly expressed in the liver, and is also abundant in heart and skeletal muscle. Highly expressed in liver.

It localises to the cell membrane. The protein localises to the basolateral cell membrane. The catalysed reaction is taurocholate(in) + ATP + H2O = taurocholate(out) + ADP + phosphate + H(+). The enzyme catalyses cholesterol(in) + ATP + H2O = cholesterol(out) + ADP + phosphate + H(+). Cholesterol efflux is increased by extracellularly applied taurocholate. In terms of biological role, mediates cholesterol and taurocholate efflux. Through the interaction with ABCA1 potentiates the cholesterol efflux to lipid-free APOA1, in turn regulates high-density lipoprotein cholesterol levels. This Mus musculus (Mouse) protein is ABC-type organic anion transporter ABCA8B.